We begin with the raw amino-acid sequence, 214 residues long: Pyridoxine/pyridoxamine 5'-phosphate oxidase (214 aa).

Residues 10 to 13 and Lys68 each bind substrate; that span reads RLNY. FMN contacts are provided by residues 63 to 68, 78 to 79, Lys85, and Gln107; these read RMVLLK and YT. Substrate is bound by residues Tyr125, Arg129, and Ser133. FMN-binding positions include 142-143 and Trp187; that span reads QS. A substrate-binding site is contributed by 193–195; it reads RLH. Arg197 contributes to the FMN binding site.

It belongs to the pyridoxamine 5'-phosphate oxidase family. In terms of assembly, homodimer. The cofactor is FMN.

The enzyme catalyses pyridoxamine 5'-phosphate + O2 + H2O = pyridoxal 5'-phosphate + H2O2 + NH4(+). It catalyses the reaction pyridoxine 5'-phosphate + O2 = pyridoxal 5'-phosphate + H2O2. It functions in the pathway cofactor metabolism; pyridoxal 5'-phosphate salvage; pyridoxal 5'-phosphate from pyridoxamine 5'-phosphate: step 1/1. It participates in cofactor metabolism; pyridoxal 5'-phosphate salvage; pyridoxal 5'-phosphate from pyridoxine 5'-phosphate: step 1/1. Its function is as follows. Catalyzes the oxidation of either pyridoxine 5'-phosphate (PNP) or pyridoxamine 5'-phosphate (PMP) into pyridoxal 5'-phosphate (PLP). The sequence is that of Pyridoxine/pyridoxamine 5'-phosphate oxidase from Synechocystis sp. (strain ATCC 27184 / PCC 6803 / Kazusa).